Reading from the N-terminus, the 684-residue chain is Signal peptide peptidase-like 2C (684 aa).

The signal sequence occupies residues 1–21; sequence MACLGFLLPVGFLLLISTVAG. The Lumenal segment spans residues 22–186; sequence GKYGVAHVVS…APPEPIIDYN (165 aa). One can recognise a PA domain in the interval 83-163; that stretch reads SPSQRPLRQT…HYADMLDILS (81 aa). Asn100 carries N-linked (GlcNAc...) asparagine glycosylation. Residues 187-207 form a helical membrane-spanning segment; sequence MLVIFILAVGTVAAGGYWAGL. Topologically, residues 208-253 are cytoplasmic; sequence TEANRLQRRRARRGGGSGGHHQLQEAAAAEGAQKEDNEDIPVDFTP. Residues 216–242 are disordered; it reads RRARRGGGSGGHHQLQEAAAAEGAQKE. Low complexity predominate over residues 227–238; that stretch reads HHQLQEAAAAEG. A helical membrane pass occupies residues 254-274; sequence AMTGVVVTLSCSLMLLLYFFY. At 275-276 the chain is on the lumenal side; the sequence is DH. Residues 277 to 297 form a helical membrane-spanning segment; it reads FVYVTIGIFGLGAGIGLYSCL. Residues 298 to 319 lie on the Cytoplasmic side of the membrane; it reads SPLVCRLSLRQYQRPPHSLWAS. The helical transmembrane segment at 320–340 threads the bilayer; it reads LPLPLLLLASLCATVIIFWVA. The Lumenal segment spans residues 341 to 346; it reads YRNEDR. A helical transmembrane segment spans residues 347 to 365; sequence WAWLLQDTLGISYCLFVLH. Topologically, residues 366–376 are cytoplasmic; it reads RVRLPTLKNCS. Residues 377 to 397 traverse the membrane as a helical segment; that stretch reads SFLLALLAFDVFFVFVTPFFT. Asp386 is a catalytic residue. Residues 398-439 are Lumenal-facing; the sequence is KTGESIMAQVALGPAESSSHERLPMVLKVPRLRVSALTLCSQ. Residues 440 to 460 form a helical membrane-spanning segment; that stretch reads PFSILGFGDIVVPGFLVAYCC. The active site involves Asp448. The Cytoplasmic segment spans residues 461–472; it reads RFDVQVCSRQIY. The helical transmembrane segment at 473–493 threads the bilayer; it reads FVACTVAYAVGLLVTFMAMVL. Residues 494 to 495 lie on the Lumenal side of the membrane; sequence MQ. The helical transmembrane segment at 496 to 516 threads the bilayer; it reads MGQPALLYLVSSTLLTSLAVA. Positions 499-501 match the PAL motif; that stretch reads PAL. Residues 517–684 lie on the Cytoplasmic side of the membrane; that stretch reads ACRQELSLFW…RKSMSTQAPL (168 aa). Residues 548–614 form a disordered region; that stretch reads KQEGAADAHT…SDAHLDPNEL (67 aa). The span at 582 to 592 shows a compositional bias: polar residues; sequence EIVTISENEAT. The segment covering 594-611 has biased composition (basic and acidic residues); that stretch reads PEDRSDSSEGWSDAHLDP.

The protein belongs to the peptidase A22B family. Interacts (via active sites) with FREY; the interaction stabilizes FREY1 protein and inhibits SPPL2C proteolytic activity. In terms of processing, glycosylated. As to expression, highly expressed in testis where it is primarily localised in spermatids (at protein level).

It localises to the endoplasmic reticulum membrane. Its function is as follows. Sperm-specific intramembrane-cleaving aspartic protease (I-CLiP) that cleaves distinct tail-anchored proteins and SNARE proteins. In elongated spermatids, modulates intracellular Ca(2+) homeostasis by controlling PLN abundance through proteolytic cleavage. During spermatogenesis, processes SNARE proteins and impacts vesicular trafficking which supports compartmental reorganization in maturating spermatids and may play a role in formation of the acrosome. Functionally, in round spermatids, acts as a scaffold protein supporting FREY1 in IZUMO1 recruitment at the endoplasmic reticulum membrane and coordination of IZUMO1 complex assembly. Stabilizes FREY1 at the endoplasmic reticulum membrane through interaction. May recruit IZUMO1 interaction partners. This chain is Signal peptide peptidase-like 2C, found in Homo sapiens (Human).